Reading from the N-terminus, the 138-residue chain is Acidic phospholipase A2 Cvv-E6f (138 aa).

The signal sequence occupies residues 1-16; it reads MRTLWIVAVLLLGVEG. 7 disulfides stabilise this stretch: Cys42–Cys131, Cys44–Cys60, Cys59–Cys111, Cys65–Cys138, Cys66–Cys104, Cys73–Cys97, and Cys91–Cys102. Ca(2+)-binding residues include Tyr43, Gly45, and Gly47. His63 is a catalytic residue. A Ca(2+)-binding site is contributed by Asp64. Residue Asp105 is part of the active site.

It depends on Ca(2+) as a cofactor. Expressed by the venom gland.

The protein resides in the secreted. It catalyses the reaction a 1,2-diacyl-sn-glycero-3-phosphocholine + H2O = a 1-acyl-sn-glycero-3-phosphocholine + a fatty acid + H(+). In terms of biological role, snake venom phospholipase A2 (PLA2) that shows very low inhibition of ADP-induced platelet aggregation in platelet-rich plasma of human, rabbit and guinea pig. In vivo, shows efficient edema-inducing activities in rat paws. PLA2 catalyzes the calcium-dependent hydrolysis of the 2-acyl groups in 3-sn-phosphoglycerides. This Crotalus viridis viridis (Prairie rattlesnake) protein is Acidic phospholipase A2 Cvv-E6f.